The chain runs to 729 residues: Fatty acid oxidation complex subunit alpha (729 aa).

The tract at residues 1 to 189 (MLYKGDTLYL…KIGLVDGVVK (189 aa)) is enoyl-CoA hydratase/isomerase. Substrate is bound at residue Asp-296. A 3-hydroxyacyl-CoA dehydrogenase region spans residues 311–729 (ETPKHAAVLG…ARPVGELKTA (419 aa)). NAD(+) contacts are provided by residues Met-324, Asp-343, 400-402 (VVE), Lys-407, and Ser-429. Catalysis depends on His-450, which acts as the For 3-hydroxyacyl-CoA dehydrogenase activity. Asn-453 serves as a coordination point for NAD(+). Substrate is bound by residues Asn-500 and Tyr-660.

This sequence in the N-terminal section; belongs to the enoyl-CoA hydratase/isomerase family. The protein in the C-terminal section; belongs to the 3-hydroxyacyl-CoA dehydrogenase family. As to quaternary structure, heterotetramer of two alpha chains (FadB) and two beta chains (FadA).

It carries out the reaction a (3S)-3-hydroxyacyl-CoA + NAD(+) = a 3-oxoacyl-CoA + NADH + H(+). The catalysed reaction is a (3S)-3-hydroxyacyl-CoA = a (2E)-enoyl-CoA + H2O. It catalyses the reaction a 4-saturated-(3S)-3-hydroxyacyl-CoA = a (3E)-enoyl-CoA + H2O. The enzyme catalyses (3S)-3-hydroxybutanoyl-CoA = (3R)-3-hydroxybutanoyl-CoA. It carries out the reaction a (3Z)-enoyl-CoA = a 4-saturated (2E)-enoyl-CoA. The catalysed reaction is a (3E)-enoyl-CoA = a 4-saturated (2E)-enoyl-CoA. It participates in lipid metabolism; fatty acid beta-oxidation. In terms of biological role, involved in the aerobic and anaerobic degradation of long-chain fatty acids via beta-oxidation cycle. Catalyzes the formation of 3-oxoacyl-CoA from enoyl-CoA via L-3-hydroxyacyl-CoA. It can also use D-3-hydroxyacyl-CoA and cis-3-enoyl-CoA as substrate. The polypeptide is Fatty acid oxidation complex subunit alpha (Enterobacter cloacae).